The primary structure comprises 177 residues: Probable inosine/xanthosine triphosphatase (177 aa).

This sequence belongs to the YjjX NTPase family. As to quaternary structure, homodimer. It depends on Mg(2+) as a cofactor. Requires Mn(2+) as cofactor.

It catalyses the reaction XTP + H2O = XDP + phosphate + H(+). The catalysed reaction is ITP + H2O = IDP + phosphate + H(+). Phosphatase that hydrolyzes non-canonical purine nucleotides such as XTP and ITP to their respective diphosphate derivatives. Probably excludes non-canonical purines from DNA/RNA precursor pool, thus preventing their incorporation into DNA/RNA and avoiding chromosomal lesions. The polypeptide is Probable inosine/xanthosine triphosphatase (Pyrobaculum arsenaticum (strain DSM 13514 / JCM 11321 / PZ6)).